The following is a 159-amino-acid chain: MDVIEGNTVVSNITKIVVVVARFNKAINNHLLEGTIDTLKRVGQVQDENITIVWVPGAYELPLVSQALSISNKYDAIIVLGTIIRGITEHFEFIYKSCNFGLSNISISNLVPIGLGLLVTNDIGQAVERIGIKGNNKGSEAALAALEMINILKTIKNNN.

5-amino-6-(D-ribitylamino)uracil-binding positions include phenylalanine 23, 58–60 (AYE), and 82–84 (TII). Residue histidine 90 is the Proton donor of the active site. Leucine 115 is a 5-amino-6-(D-ribitylamino)uracil binding site. Arginine 129 contributes to the (2S)-2-hydroxy-3-oxobutyl phosphate binding site.

It belongs to the DMRL synthase family. In terms of assembly, forms an icosahedral capsid composed of 60 subunits, arranged as a dodecamer of pentamers.

The catalysed reaction is (2S)-2-hydroxy-3-oxobutyl phosphate + 5-amino-6-(D-ribitylamino)uracil = 6,7-dimethyl-8-(1-D-ribityl)lumazine + phosphate + 2 H2O + H(+). It participates in cofactor biosynthesis; riboflavin biosynthesis; riboflavin from 2-hydroxy-3-oxobutyl phosphate and 5-amino-6-(D-ribitylamino)uracil: step 1/2. In terms of biological role, catalyzes the formation of 6,7-dimethyl-8-ribityllumazine by condensation of 5-amino-6-(D-ribitylamino)uracil with 3,4-dihydroxy-2-butanone 4-phosphate. This is the penultimate step in the biosynthesis of riboflavin. This Blochmanniella floridana protein is 6,7-dimethyl-8-ribityllumazine synthase.